The primary structure comprises 321 residues: Probable proline iminopeptidase (321 aa).

In terms of domain architecture, AB hydrolase-1 spans 35–296; it reads KPVVFLHGGP…IVVPDAGHSM (262 aa). Catalysis depends on S110, which acts as the Nucleophile. D266 is an active-site residue. H294 acts as the Proton donor in catalysis.

This sequence belongs to the peptidase S33 family.

The protein resides in the cytoplasm. It catalyses the reaction Release of N-terminal proline from a peptide.. Its function is as follows. Specifically catalyzes the removal of N-terminal proline residues from peptides. The sequence is that of Probable proline iminopeptidase (pip) from Leptolyngbya boryana (Plectonema boryanum).